A 250-amino-acid polypeptide reads, in one-letter code: Ribosomal RNA small subunit methyltransferase J (250 aa).

Residues 102-103, 118-119, 154-155, and Asp172 each bind S-adenosyl-L-methionine; these read RD, ER, and SS.

The protein belongs to the methyltransferase superfamily. RsmJ family.

The protein localises to the cytoplasm. It catalyses the reaction guanosine(1516) in 16S rRNA + S-adenosyl-L-methionine = N(2)-methylguanosine(1516) in 16S rRNA + S-adenosyl-L-homocysteine + H(+). Specifically methylates the guanosine in position 1516 of 16S rRNA. In Edwardsiella ictaluri (strain 93-146), this protein is Ribosomal RNA small subunit methyltransferase J.